The following is a 199-amino-acid chain: MQYPLPIAHLIDAYMKLPGIGEKTATRLAFYTMDMPQEDVEDFSKALIQVKQDIHQCPICGNITEKEICDICSNPNRDQTTIMVVEQPKDLMALEEMGEYDGLYHVLHGVLSPMDGIGPEEVNIKSLITRLQKNDDVKEVILALNSTPEGESTSMYISKLIKPAGIKVTRLAAGLSVGSDIEYANSITLKRAVQGRTTL.

Residues 57–72 (CPICGNITEKEICDIC) form a C4-type zinc finger. A Toprim domain is found at 80–176 (TTIMVVEQPK…KVTRLAAGLS (97 aa)).

It belongs to the RecR family.

Its function is as follows. May play a role in DNA repair. It seems to be involved in an RecBC-independent recombinational process of DNA repair. It may act with RecF and RecO. The sequence is that of Recombination protein RecR from Lactobacillus acidophilus (strain ATCC 700396 / NCK56 / N2 / NCFM).